The following is a 514-amino-acid chain: Membrane-bound lytic murein transglycosylase F (514 aa).

The first 30 residues, 1 to 30 (MLSNNPLITKFRELFTVALVLALLSGCQWQ), serve as a signal peptide directing secretion. The segment at 31 to 271 (DDNLTDLEKI…QLEEKYFGHV (241 aa)) is non-LT domain. The interval 272–514 (GSFDYVDTRA…KTIEDPGPSQ (243 aa)) is LT domain. Glu-316 is an active-site residue. Residues 482–514 (PVPPRQANVDGSLNNEAAISSAEKTIEDPGPSQ) form a disordered region. Residues 490–499 (VDGSLNNEAA) show a composition bias toward polar residues.

It in the N-terminal section; belongs to the bacterial solute-binding protein 3 family. In the C-terminal section; belongs to the transglycosylase Slt family.

Its subcellular location is the cell outer membrane. The enzyme catalyses Exolytic cleavage of the (1-&gt;4)-beta-glycosidic linkage between N-acetylmuramic acid (MurNAc) and N-acetylglucosamine (GlcNAc) residues in peptidoglycan, from either the reducing or the non-reducing ends of the peptidoglycan chains, with concomitant formation of a 1,6-anhydrobond in the MurNAc residue.. Murein-degrading enzyme that degrades murein glycan strands and insoluble, high-molecular weight murein sacculi, with the concomitant formation of a 1,6-anhydromuramoyl product. Lytic transglycosylases (LTs) play an integral role in the metabolism of the peptidoglycan (PG) sacculus. Their lytic action creates space within the PG sacculus to allow for its expansion as well as for the insertion of various structures such as secretion systems and flagella. The chain is Membrane-bound lytic murein transglycosylase F from Photobacterium profundum (strain SS9).